Consider the following 1070-residue polypeptide: DNA-directed RNA polymerase subunit beta (1070 aa).

The protein belongs to the RNA polymerase beta chain family. In plastids the minimal PEP RNA polymerase catalytic core is composed of four subunits: alpha, beta, beta', and beta''. When a (nuclear-encoded) sigma factor is associated with the core the holoenzyme is formed, which can initiate transcription.

It localises to the plastid. Its subcellular location is the chloroplast. The catalysed reaction is RNA(n) + a ribonucleoside 5'-triphosphate = RNA(n+1) + diphosphate. Functionally, DNA-dependent RNA polymerase catalyzes the transcription of DNA into RNA using the four ribonucleoside triphosphates as substrates. The chain is DNA-directed RNA polymerase subunit beta from Populus alba (White poplar).